A 134-amino-acid polypeptide reads, in one-letter code: Cytochrome b (134 aa).

3 helical membrane passes run 33-53 (FGSLLGVCLAVQILTGLFLAM), 77-98 (WLLRYLHANGASMFFICLYLHV), and 113-133 (WNVGILLLFAVMATAFMGYVL). The heme b site is built by His83 and His97.

The protein belongs to the cytochrome b family. In terms of assembly, the cytochrome bc1 complex contains 11 subunits: 3 respiratory subunits (MT-CYB, CYC1 and UQCRFS1), 2 core proteins (UQCRC1 and UQCRC2) and 6 low-molecular weight proteins (UQCRH/QCR6, UQCRB/QCR7, UQCRQ/QCR8, UQCR10/QCR9, UQCR11/QCR10 and a cleavage product of UQCRFS1). This cytochrome bc1 complex then forms a dimer. Heme b serves as cofactor.

Its subcellular location is the mitochondrion inner membrane. Functionally, component of the ubiquinol-cytochrome c reductase complex (complex III or cytochrome b-c1 complex) that is part of the mitochondrial respiratory chain. The b-c1 complex mediates electron transfer from ubiquinol to cytochrome c. Contributes to the generation of a proton gradient across the mitochondrial membrane that is then used for ATP synthesis. The sequence is that of Cytochrome b (MT-CYB) from Chiroderma trinitatum (Little big-eyed bat).